The sequence spans 785 residues: Ribosome biogenesis protein BOP1 homolog (785 aa).

Over residues 1 to 11 the composition is skewed to basic residues; that stretch reads MTKKLTIKRKV. The segment at 1–160 is disordered; it reads MTKKLTIKRK…DSDTSDEEDI (160 aa). Acidic residues-rich tracts occupy residues 45–54, 61–73, and 85–102; these read EDSTDDEGID, SSED…DEEG, and SGDD…EDDA. A compositionally biased stretch (basic and acidic residues) spans 103–112; sequence DAKKSSKNND. The segment covering 150 to 159 has biased composition (acidic residues); the sequence is ADSDTSDEED. WD repeat units follow at residues 446–487, 489–527, 571–613, 616–654, 657–696, 700–739, and 755–785; these read GHTD…RTIE, EDVV…KLLV, THFK…SQIP, KSKG…LIKK, TNSK…KPYQ, LHRN…DLLQ, and REEF…RLFT.

The protein belongs to the WD repeat BOP1/ERB1 family.

It localises to the nucleus. The protein localises to the nucleolus. Its subcellular location is the nucleoplasm. Required for maturation of ribosomal RNAs and formation of the large ribosomal subunit. The polypeptide is Ribosome biogenesis protein BOP1 homolog (Drosophila persimilis (Fruit fly)).